The chain runs to 214 residues: uncharacterized protein (214 aa).

The stretch at 39–68 forms a coiled coil; it reads KLRSKKEVEEKIKEVDRELEEVVNAGVSIN. Residues 99 to 114 show a composition bias toward basic and acidic residues; sequence EIKVEAPEPDEEKLPD. A disordered region spans residues 99 to 162; that stretch reads EIKVEAPEPD…EEVEFDEEDD (64 aa). The span at 123–162 shows a compositional bias: acidic residues; the sequence is SDLDMDFEDLGQEIPLDADEQEEEEEEEEVEEVEFDEEDD. The stretch at 138–212 forms a coiled coil; sequence LDADEQEEEE…IQRLKVLSGG (75 aa).

This is an uncharacterized protein from Archaeoglobus fulgidus (strain ATCC 49558 / DSM 4304 / JCM 9628 / NBRC 100126 / VC-16).